Consider the following 38-residue polypeptide: Photosystem I reaction center subunit IX (38 aa).

A helical membrane pass occupies residues 4-24 (FLTTAPVVAAIWFTLTAGILI).

The protein belongs to the PsaJ family.

The protein localises to the cellular thylakoid membrane. Functionally, may help in the organization of the PsaE and PsaF subunits. This chain is Photosystem I reaction center subunit IX, found in Parasynechococcus marenigrum (strain WH8102).